The chain runs to 332 residues: DNA-directed RNA polymerase subunit alpha (332 aa).

The interval 1–226 is alpha N-terminal domain (alpha-NTD); that stretch reads MLIAQRPTLT…ELFGLCRELN (226 aa). Residues 245–332 are alpha C-terminal domain (alpha-CTD); it reads PEMNIPIEDL…GGTFFSPEDE (88 aa).

Belongs to the RNA polymerase alpha chain family. Homodimer. The RNAP catalytic core consists of 2 alpha, 1 beta, 1 beta' and 1 omega subunit. When a sigma factor is associated with the core the holoenzyme is formed, which can initiate transcription.

The catalysed reaction is RNA(n) + a ribonucleoside 5'-triphosphate = RNA(n+1) + diphosphate. In terms of biological role, DNA-dependent RNA polymerase catalyzes the transcription of DNA into RNA using the four ribonucleoside triphosphates as substrates. This Bifidobacterium adolescentis (strain ATCC 15703 / DSM 20083 / NCTC 11814 / E194a) protein is DNA-directed RNA polymerase subunit alpha.